The sequence spans 708 residues: Quinohemoprotein alcohol dehydrogenase (708 aa).

A signal peptide spans 1 to 31; that stretch reads MERLIDNSHGWPGRMVWLLAACLGSAAAFAQ. Residue Glu101 participates in pyrroloquinoline quinone binding. Cys147 and Cys148 are oxidised to a cystine. Residues Arg153, Thr198, and 214-215 contribute to the pyrroloquinoline quinone site; that span reads GA. Residue Glu216 coordinates Ca(2+). Residue Thr274 participates in pyrroloquinoline quinone binding. Ca(2+)-binding residues include Asn294 and Asp339. The Proton acceptor role is filled by Asp339. Residues Lys366, 425–426, and Val575 contribute to the pyrroloquinoline quinone site; that span reads NW. The 90-residue stretch at 619–708 folds into the Cytochrome c domain; sequence YDPAKVEAGT…GTADAIRPKP (90 aa). Residues Cys635, Cys638, His639, and Met678 each contribute to the heme c site.

Belongs to the bacterial PQQ dehydrogenase family. Monomer. Pyrroloquinoline quinone is required as a cofactor. Ca(2+) serves as cofactor. The cofactor is heme c. Post-translationally, in the crystallographic structures Trp-543 is oxidized to 2'-hydroxytryptophan.

It localises to the periplasm. It carries out the reaction 2 oxidized [azurin] + a primary alcohol = 2 reduced [azurin] + an aldehyde + 2 H(+). In terms of biological role, catalyzes the dye-linked oxidation of primary alcohols to the corresponding aldehydes and the (subsequent) oxidation of the aldehydes to carboxylic acids. Methanol is not a substrate. This Comamonas testosteroni (Pseudomonas testosteroni) protein is Quinohemoprotein alcohol dehydrogenase.